A 93-amino-acid chain; its full sequence is Small ribosomal subunit protein uS19 (93 aa).

It belongs to the universal ribosomal protein uS19 family.

Protein S19 forms a complex with S13 that binds strongly to the 16S ribosomal RNA. The sequence is that of Small ribosomal subunit protein uS19 from Frankia casuarinae (strain DSM 45818 / CECT 9043 / HFP020203 / CcI3).